We begin with the raw amino-acid sequence, 141 residues long: Nucleoside diphosphate kinase (141 aa).

Positions 11, 59, 87, 93, 104, and 114 each coordinate ATP. Histidine 117 serves as the catalytic Pros-phosphohistidine intermediate.

Belongs to the NDK family. As to quaternary structure, homotetramer. Requires Mg(2+) as cofactor.

The protein resides in the cytoplasm. It carries out the reaction a 2'-deoxyribonucleoside 5'-diphosphate + ATP = a 2'-deoxyribonucleoside 5'-triphosphate + ADP. The enzyme catalyses a ribonucleoside 5'-diphosphate + ATP = a ribonucleoside 5'-triphosphate + ADP. Major role in the synthesis of nucleoside triphosphates other than ATP. The ATP gamma phosphate is transferred to the NDP beta phosphate via a ping-pong mechanism, using a phosphorylated active-site intermediate. This Albidiferax ferrireducens (strain ATCC BAA-621 / DSM 15236 / T118) (Rhodoferax ferrireducens) protein is Nucleoside diphosphate kinase.